The sequence spans 98 residues: Dehydrogenase acuH (98 aa).

The protein operates within secondary metabolite biosynthesis. Dehydrogenase; part of the gene cluster that mediates the biosynthesis of aculins. The pathway begins with the synthesis of 6-methylsalicylic acid by the polyketide synthase (PKS) acuA via condensation of acetate and malonate units. The 6-methylsalicylic acid decarboxylase acuB then catalyzes the decarboxylation of 6-methylsalicylic acid to yield m-cresol (also known as 3-methylphenol). These first reactions occur in the cytosol. The intermediate m-cresol is then transported into the endoplasmic reticulum where the cytochrome P450 monooxygenase acuC converts it to m-hydroxybenzyl alcohol, which is further converted to gentisyl alcohol by the cytochrome P450 monooxygenase acuD. Gentisyl alcohol is further oxidized by the oxidoreductase acuE that probably catalyzes hydroxylation of the aromatic ring. The aromatic system might then be opened by oxidation through a Baeyer-Villiger type of oxidation, which could be catalyzed by acuF, with the carboxylic acid at C-1 subsequently reduced to an aldehyde by acuG. Subsequently, a hemiacetal is formed, before the dehydrogenase acuH would reduce the double bond between C-4 and C-6. Finally, keto-enol tautomerism results in formation of aculinic acid, which exists as two diastereomers (both R/S configurations at C-1) by non-enzymatic hemiacetal formation. The carboxypeptidase acuI could be involved in the linking of aculinic acid to an aculene A moiety produced by the aculene biosynthesis cluster and which leads to the production of aculin A. AcuI may also be involved in the attachment of proline to aculinic acid to form epi-aculins A and B. This is Dehydrogenase acuH from Aspergillus aculeatus (strain ATCC 16872 / CBS 172.66 / WB 5094).